Consider the following 481-residue polypeptide: Glutamyl-tRNA(Gln) amidotransferase subunit A (481 aa).

Residues K76 and S151 each act as charge relay system in the active site. Catalysis depends on S175, which acts as the Acyl-ester intermediate.

This sequence belongs to the amidase family. GatA subfamily. Heterotrimer of A, B and C subunits.

It catalyses the reaction L-glutamyl-tRNA(Gln) + L-glutamine + ATP + H2O = L-glutaminyl-tRNA(Gln) + L-glutamate + ADP + phosphate + H(+). In terms of biological role, allows the formation of correctly charged Gln-tRNA(Gln) through the transamidation of misacylated Glu-tRNA(Gln) in organisms which lack glutaminyl-tRNA synthetase. The reaction takes place in the presence of glutamine and ATP through an activated gamma-phospho-Glu-tRNA(Gln). The chain is Glutamyl-tRNA(Gln) amidotransferase subunit A from Neisseria meningitidis serogroup A / serotype 4A (strain DSM 15465 / Z2491).